The sequence spans 456 residues: tRNA modification GTPase MnmE (456 aa).

Residues arginine 21, glutamate 85, and lysine 124 each coordinate (6S)-5-formyl-5,6,7,8-tetrahydrofolate. In terms of domain architecture, TrmE-type G spans 220-379 (QFRIVLYGEP…LLDAIKERTG (160 aa)). Asparagine 230 is a binding site for K(+). GTP-binding positions include 230 to 235 (NTGKSS), 249 to 255 (SEIPGTT), and 274 to 277 (DTAG). Serine 234 is a binding site for Mg(2+). K(+)-binding residues include serine 249, isoleucine 251, and threonine 254. Threonine 255 is a binding site for Mg(2+). A (6S)-5-formyl-5,6,7,8-tetrahydrofolate-binding site is contributed by lysine 456.

Belongs to the TRAFAC class TrmE-Era-EngA-EngB-Septin-like GTPase superfamily. TrmE GTPase family. As to quaternary structure, homodimer. Heterotetramer of two MnmE and two MnmG subunits. K(+) is required as a cofactor.

Its subcellular location is the cytoplasm. In terms of biological role, exhibits a very high intrinsic GTPase hydrolysis rate. Involved in the addition of a carboxymethylaminomethyl (cmnm) group at the wobble position (U34) of certain tRNAs, forming tRNA-cmnm(5)s(2)U34. This chain is tRNA modification GTPase MnmE, found in Leptospira interrogans serogroup Icterohaemorrhagiae serovar copenhageni (strain Fiocruz L1-130).